The sequence spans 122 residues: Large ribosomal subunit protein uL14 (122 aa).

Belongs to the universal ribosomal protein uL14 family. In terms of assembly, part of the 50S ribosomal subunit. Forms a cluster with proteins L3 and L19. In the 70S ribosome, L14 and L19 interact and together make contacts with the 16S rRNA in bridges B5 and B8.

In terms of biological role, binds to 23S rRNA. Forms part of two intersubunit bridges in the 70S ribosome. This Helicobacter acinonychis (strain Sheeba) protein is Large ribosomal subunit protein uL14.